The chain runs to 443 residues: F-box only protein 39 (443 aa).

One can recognise an F-box domain in the interval 13–59; that stretch reads QSCWATLPDVCLRRVFWWLGDRDRSRAALVCRKWNQIMYSADLWRYR.

Directly interacts with SKP1 and CUL1.

In terms of biological role, substrate-recognition component of the SCF (SKP1-CUL1-F-box protein)-type E3 ubiquitin ligase complex. This Rattus norvegicus (Rat) protein is F-box only protein 39 (Fbxo39).